Reading from the N-terminus, the 665-residue chain is Anaphase-promoting complex subunit 3 (665 aa).

The TPR 1 repeat unit spans residues 115–148 (SCMLDVLGTMYKKAGFLKKATDCFVEAVSINPYN). A DNA-binding region spans residues 191–257 (VPEPSFLKKS…HQSLKLQSQS (67 aa)). TPR repeat units lie at residues 329-362 (LLKL…QQNT), 363-396 (PFVL…SPSR), 431-464 (PESW…DPTF), 466-498 (YAYT…NVRH), 499-532 (YNAW…NPNN), 534-566 (VLIT…DEKS), 568-600 (LARF…APDE), and 601-634 (ANVH…DGKA).

This sequence belongs to the APC3/CDC27 family. As to quaternary structure, the APC/C is composed of at least 13 subunits: apc1, apc2, nuc2, apc4, apc5, cut9, apc8, apc10, apc11, hcn1, apc13, apc14 and apc15. Interacts with apc10 and cut9.

The protein localises to the nucleus. Component of the anaphase-promoting complex/cyclosome (APC/C), a cell cycle-regulated E3 ubiquitin-protein ligase complex that controls progression through mitosis and the G1 phase of the cell cycle. The APC/C is thought to confer substrate specificity and, in the presence of ubiquitin-conjugating E2 enzymes, it catalyzes the formation of protein-ubiquitin conjugates that are subsequently degraded by the 26S proteasome. Interacts with spindle apparatus, chromosomes, or nuclear envelope, and interconnect nuclear and cytoskeletal functions in mitosis, so the elongation of the spindle in anaphase is blocked. The chain is Anaphase-promoting complex subunit 3 (nuc2) from Schizosaccharomyces pombe (strain 972 / ATCC 24843) (Fission yeast).